The following is a 255-amino-acid chain: 4-hydroxy-tetrahydrodipicolinate reductase (255 aa).

NAD(+)-binding positions include 9-14, 89-91, and 115-118; these read GFKGKM, GTT, and APNF. H145 acts as the Proton donor/acceptor in catalysis. (S)-2,3,4,5-tetrahydrodipicolinate is bound at residue H146. Catalysis depends on K149, which acts as the Proton donor. Position 155–156 (155–156) interacts with (S)-2,3,4,5-tetrahydrodipicolinate; that stretch reads GT.

It belongs to the DapB family.

Its subcellular location is the cytoplasm. It carries out the reaction (S)-2,3,4,5-tetrahydrodipicolinate + NAD(+) + H2O = (2S,4S)-4-hydroxy-2,3,4,5-tetrahydrodipicolinate + NADH + H(+). The enzyme catalyses (S)-2,3,4,5-tetrahydrodipicolinate + NADP(+) + H2O = (2S,4S)-4-hydroxy-2,3,4,5-tetrahydrodipicolinate + NADPH + H(+). It participates in amino-acid biosynthesis; L-lysine biosynthesis via DAP pathway; (S)-tetrahydrodipicolinate from L-aspartate: step 4/4. Its function is as follows. Catalyzes the conversion of 4-hydroxy-tetrahydrodipicolinate (HTPA) to tetrahydrodipicolinate. This Streptococcus sanguinis (strain SK36) protein is 4-hydroxy-tetrahydrodipicolinate reductase.